Reading from the N-terminus, the 701-residue chain is MGSEKDSESPHSSVSGIPNPKCRGPGKKQGRISFHSLFHSKRGPRGSKANVGTPLAQQLHQQQQIQQQQLLQPPTPTNVSSDPSTADPAEPLSTSQASLGGQELLECPLCLVRQPAEQLPELQGCSHRSCLCCLRQYLRIEITESRVQLSCPECAERLAPWQVALILDDPNLMEKYEEFLLRRCLASDPDCRWCPAPDCGFAVIASGCASCPRLVCRREGCGAEFCYHCKQAWHPNQTCDSARQQRALSLRTHSNHSPSYTAEQGHTDDIKPCPRCGAYIIKMNDGSCNHMTCAVCGCEFCWLCMKEISDLHYLSPSGCTFWGKKPWSRKKKILWQLGTLIGAPVGITLIAGIAVPAMVIGIPVYIGRKIHSHYEGKKTSHHRRNLAITGGVALSIITAPVIAAVSVGIGVPIMLAYVYGVVPISLCRGGGCGVSRGKGRGVRIDFDEDDGPITVADAWRALKSPSLGESSLEGAASGLSTTSPSEGLSVAPGGLGDTPHFNTLAGGALGARTGKYSRLEVQGTELGKEVAGRETGSLGAASDCASTRGMAGSITSSYTLPDREGTNLEIQVDIETKPSHLCLTTEEDLAPPTAAMAPGVGEEPQDCSSRRSRTVMDSPLGLSPGMSLREGLRDVTLAQPESIRSDLEMSDTQSDDIAELTSDDCDSPHPKSCHGAPPQATCRALNPTDSLHCPDNVILYV.

The segment at 1 to 97 (MGSEKDSESP…PAEPLSTSQA (97 aa)) is disordered. Residues 1 to 304 (MGSEKDSESP…VCGCEFCWLC (304 aa)) form a required for ubiquitin ligase activity and for protection against staurosporin-induced cell death region. Low complexity predominate over residues 57–72 (QQLHQQQQIQQQQLLQ). Positions 103–323 (ELLECPLCLV…LSPSGCTFWG (221 aa)) are TRIAD supradomain. Residues Cys107, Cys110, Cys130, Cys133, Cys194, Cys199, Cys216, Cys221, Cys226, Cys229, His234, Cys239, Cys273, and Cys276 each contribute to the Zn(2+) site. The RING-type 1 zinc-finger motif lies at 107–156 (CPLCLVRQPAEQLPELQGCSHRSCLCCLRQYLRIEITESRVQLSCPECAE). The IBR-type zinc finger occupies 174–239 (EKYEEFLLRR…KQAWHPNQTC (66 aa)). Residues 273–304 (CPRCGAYIIKMNDGSCNHMTCAVCGCEFCWLC) form an RING-type 2; atypical zinc finger. The active site involves Cys288. Zn(2+) is bound by residues Cys293, Cys296, Cys301, Cys304, His312, and Cys319. A run of 2 helical transmembrane segments spans residues 340–360 (LIGAPVGITLIAGIAVPAMVI) and 396–416 (IITAPVIAAVSVGIGVPIMLA). Disordered stretches follow at residues 472-495 (LEGAASGLSTTSPSEGLSVAPGGL) and 658-677 (AELTSDDCDSPHPKSCHGAP).

This sequence belongs to the RBR family. RNF19 subfamily. In terms of assembly, interacts with UBE2L3, UBE2L6 and UCKL1.

It is found in the cytoplasmic granule membrane. The protein localises to the endoplasmic reticulum membrane. It carries out the reaction [E2 ubiquitin-conjugating enzyme]-S-ubiquitinyl-L-cysteine + [acceptor protein]-L-lysine = [E2 ubiquitin-conjugating enzyme]-L-cysteine + [acceptor protein]-N(6)-ubiquitinyl-L-lysine.. The protein operates within protein modification; protein ubiquitination. Functionally, E3 ubiquitin-protein ligase which accepts ubiquitin from E2 ubiquitin-conjugating enzymes UBE2L3 and UBE2L6 in the form of a thioester and then directly transfers the ubiquitin to targeted substrates, such as UCKL1. Involved in the cytolytic activity of natural killer cells and cytotoxic T-cells. Protects against staurosporin-induced cell death. The chain is E3 ubiquitin-protein ligase RNF19B (rnf19b) from Danio rerio (Zebrafish).